Reading from the N-terminus, the 166-residue chain is Phosphopantetheine adenylyltransferase (166 aa).

A substrate-binding site is contributed by S10. ATP contacts are provided by residues 10-11 (SF) and H18. Residues K42, A79, and R93 each coordinate substrate. ATP is bound by residues 94–96 (GLR), E104, and 129–135 (VRPITAT).

This sequence belongs to the bacterial CoaD family. As to quaternary structure, homohexamer. Mg(2+) serves as cofactor.

The protein localises to the cytoplasm. It carries out the reaction (R)-4'-phosphopantetheine + ATP + H(+) = 3'-dephospho-CoA + diphosphate. It functions in the pathway cofactor biosynthesis; coenzyme A biosynthesis; CoA from (R)-pantothenate: step 4/5. Functionally, reversibly transfers an adenylyl group from ATP to 4'-phosphopantetheine, yielding dephospho-CoA (dPCoA) and pyrophosphate. The sequence is that of Phosphopantetheine adenylyltransferase from Methylobacterium sp. (strain 4-46).